Consider the following 402-residue polypeptide: Omega-3 fatty acid desaturase fat-1 (402 aa).

Helical transmembrane passes span 79-99, 101-121, 235-255, and 260-280; these read LVQD…FEYF, LFGY…LFVV, CVIS…IAGS, and FWYY…VTYL.

The protein belongs to the fatty acid desaturase type 1 family.

The protein localises to the membrane. The enzyme catalyses (9Z,12Z)-octadecadienoyl-CoA + 2 Fe(II)-[cytochrome b5] + O2 + 2 H(+) = (9Z,12Z,15Z)-octadecatrienoyl-CoA + 2 Fe(III)-[cytochrome b5] + 2 H2O. The catalysed reaction is (8Z,11Z,14Z)-eicosatrienoyl-CoA + 2 Fe(II)-[cytochrome b5] + O2 + 2 H(+) = (8Z,11Z,14Z,17Z)-eicosatetraenoyl-CoA + 2 Fe(III)-[cytochrome b5] + 2 H2O. It catalyses the reaction (5Z,8Z,11Z,14Z)-eicosatetraenoyl-CoA + 2 Fe(II)-[cytochrome b5] + O2 + 2 H(+) = (5Z,8Z,11Z,14Z,17Z)-eicosapentaenoyl-CoA + 2 Fe(III)-[cytochrome b5] + 2 H2O. It carries out the reaction (7Z,10Z,13Z,16Z)-docosatetraenoyl-CoA + 2 Fe(II)-[cytochrome b5] + O2 + 2 H(+) = (7Z,10Z,13Z,16Z,19Z)-docosapentaenoyl-CoA + 2 Fe(III)-[cytochrome b5] + 2 H2O. The enzyme catalyses (6Z,9Z,12Z)-octadecatrienoyl-CoA + 2 Fe(II)-[cytochrome b5] + O2 + 2 H(+) = (6Z,9Z,12Z,15Z)-octadecatetraenoyl-CoA + 2 Fe(III)-[cytochrome b5] + 2 H2O. It functions in the pathway lipid metabolism; polyunsaturated fatty acid biosynthesis. Functionally, omega-3 fatty acid desaturase that recognizes a range of 18- and 20-carbon omega-6 substrates. Introduces a double bond in the fatty acid chain three carbons away from terminal methyl group to biosynthesize n-3 (omega-3) polyunsaturated fatty acids (PUFAs) endogenously (PUFAs are essential for membrane structure and many cellular and physiological processes). Acts on a number of substrates like linoleoyl-CoA ((9Z,12Z)-octadecadienoyl-CoA, 18:2n-6), dihomo-gamma-linolenoyl-CoA ((8Z,11Z,14Z)-eicosatrienoyl-CoA, 20:3n-6), and arachidonoyl-CoA ((5Z,8Z,11Z,14Z)-eicosatetraenoyl-CoA, 20:4n-6), to generate alpha-linolenoyl-CoA ((9Z,12Z,15Z)-octadecatrienoyl-CoA, 18:3n-3), (8Z,11Z,14Z,17Z)-eicosatetraenoyl-CoA (20:4n-3) and (5Z,8Z,11Z,14Z,17Z)-eicosapentaenoyl-CoA (20:5n-3) respectively. Unlike plants, Caenorhabditis elegans desaturases seem to use fatty acyl-CoAs as substrates. The chain is Omega-3 fatty acid desaturase fat-1 (fat-1) from Caenorhabditis elegans.